Reading from the N-terminus, the 238-residue chain is Splicing regulator RBM11 (238 aa).

The 78-residue stretch at 10-87 (RTVFVGNLEA…RPINVQYRFG (78 aa)) folds into the RRM domain. Residues 172 to 238 (ALNHSPGPEA…CRKCKKKKRY (67 aa)) form a disordered region. A Bipartite nuclear localization signal motif is present at residues 202–237 (NKRKRQRPDSDSDSSSEDKRGNEGSQKCRKCKKKKR). Residues 228–238 (KCRKCKKKKRY) show a composition bias toward basic residues.

In terms of assembly, homodimer. As to expression, selectively expressed in brain, cerebellum and testis, and to a lower extent in kidney.

It localises to the nucleus. The protein resides in the nucleoplasm. It is found in the nucleus speckle. Tissue-specific splicing factor with potential implication in the regulation of alternative splicing during neuron and germ cell differentiation. Antagonizes SRSF1-mediated BCL-X splicing. May affect the choice of alternative 5' splice sites by binding to specific sequences in exons and antagonizing the SR protein SRSF1. The sequence is that of Splicing regulator RBM11 (Rbm11) from Mus musculus (Mouse).